A 223-amino-acid polypeptide reads, in one-letter code: Deoxyribose-phosphate aldolase (223 aa).

Asp92 (proton donor/acceptor) is an active-site residue. The active-site Schiff-base intermediate with acetaldehyde is Lys154. The active-site Proton donor/acceptor is Lys182.

It belongs to the DeoC/FbaB aldolase family. DeoC type 1 subfamily.

Its subcellular location is the cytoplasm. The enzyme catalyses 2-deoxy-D-ribose 5-phosphate = D-glyceraldehyde 3-phosphate + acetaldehyde. It functions in the pathway carbohydrate degradation; 2-deoxy-D-ribose 1-phosphate degradation; D-glyceraldehyde 3-phosphate and acetaldehyde from 2-deoxy-alpha-D-ribose 1-phosphate: step 2/2. Catalyzes a reversible aldol reaction between acetaldehyde and D-glyceraldehyde 3-phosphate to generate 2-deoxy-D-ribose 5-phosphate. The polypeptide is Deoxyribose-phosphate aldolase (Haemophilus influenzae (strain 86-028NP)).